The sequence spans 330 residues: Src kinase-associated phosphoprotein 2-A (330 aa).

A disordered region spans residues 53-77 (QDFQDKAETDDQEENDGFSLPPDAV). One can recognise a PH domain in the interval 105–208 (DYLRAGYLEK…WINVIMNARG (104 aa)). Residues 228 to 261 (SHEEDIYEELPEESEKPVTGSETPKATPVPVNNT) are disordered. A compositionally biased stretch (polar residues) spans 247–261 (GSETPKATPVPVNNT). The 62-residue stretch at 268–329 (DYANFYRGLW…PKAYIIEMYD (62 aa)) folds into the SH3 domain.

Belongs to the SKAP family. In terms of processing, phosphorylated on tyrosines.

Its subcellular location is the cytoplasm. In terms of biological role, may be involved in B-cell and macrophage adhesion processes. May play a role in src signaling pathway. The polypeptide is Src kinase-associated phosphoprotein 2-A (skap2-a) (Xenopus laevis (African clawed frog)).